Consider the following 143-residue polypeptide: Lutropin subunit beta (143 aa).

Residues 1–22 (MEMLQGLLLLWLLLLNVGGVWT) form the signal peptide. Intrachain disulfides connect C31-C79, C45-C94, C48-C132, C56-C110, C60-C112, and C115-C122. N35 is a glycosylation site (N-linked (GlcNAc...) asparagine).

Belongs to the glycoprotein hormones subunit beta family. Heterodimer of a common alpha chain and a unique beta chain which confers biological specificity to thyrotropin, lutropin, follitropin and gonadotropin.

It is found in the secreted. In terms of biological role, promotes spermatogenesis and ovulation by stimulating the testes and ovaries to synthesize steroids. The chain is Lutropin subunit beta (LHB) from Felis catus (Cat).